A 241-amino-acid chain; its full sequence is Ashwin (241 aa).

3 disordered regions span residues 1–21 (MAAQGRGRVGGGKEERVSARS), 82–102 (KMMEKKRKQNEPKSENKSVTA), and 212–241 (KRSVPKDESDLPNDLKPTEAKKKIQHCTWP). Positions 11 to 21 (GGKEERVSARS) are enriched in basic and acidic residues.

The protein belongs to the ashwin family.

The protein localises to the nucleus. This is Ashwin from Gallus gallus (Chicken).